Consider the following 311-residue polypeptide: HPr kinase/phosphorylase (311 aa).

Active-site residues include His139 and Lys160. 154-161 contributes to the ATP binding site; the sequence is GDSGVGKS. Ser161 lines the Mg(2+) pocket. Asp178 functions as the Proton acceptor; for phosphorylation activity. Proton donor; for dephosphorylation activity in the catalytic mechanism. The segment at 202–211 is important for the catalytic mechanism of both phosphorylation and dephosphorylation; that stretch reads LEIRGIGIID. Glu203 is a Mg(2+) binding site. Arg244 is an active-site residue. Residues 265–270 form an important for the catalytic mechanism of dephosphorylation region; the sequence is PVKTGR.

Belongs to the HPrK/P family. In terms of assembly, homohexamer. It depends on Mg(2+) as a cofactor.

It catalyses the reaction [HPr protein]-L-serine + ATP = [HPr protein]-O-phospho-L-serine + ADP + H(+). The catalysed reaction is [HPr protein]-O-phospho-L-serine + phosphate + H(+) = [HPr protein]-L-serine + diphosphate. In terms of biological role, catalyzes the ATP- as well as the pyrophosphate-dependent phosphorylation of a specific serine residue in HPr, a phosphocarrier protein of the phosphoenolpyruvate-dependent sugar phosphotransferase system (PTS). HprK/P also catalyzes the pyrophosphate-producing, inorganic phosphate-dependent dephosphorylation (phosphorolysis) of seryl-phosphorylated HPr (P-Ser-HPr). The two antagonistic activities of HprK/P are regulated by several intracellular metabolites, which change their concentration in response to the absence or presence of rapidly metabolisable carbon sources (glucose, fructose, etc.) in the growth medium. Therefore, by controlling the phosphorylation state of HPr, HPrK/P is a sensor enzyme that plays a major role in the regulation of carbon metabolism and sugar transport: it mediates carbon catabolite repression (CCR), and regulates PTS-catalyzed carbohydrate uptake and inducer exclusion. This Levilactobacillus brevis (strain ATCC 367 / BCRC 12310 / CIP 105137 / JCM 1170 / LMG 11437 / NCIMB 947 / NCTC 947) (Lactobacillus brevis) protein is HPr kinase/phosphorylase.